The chain runs to 280 residues: MNTTHVPEPHRTEQHAENQRHWRKILGIAPIVSIAFPATMYFISDEDSFEDSLFLRFITVLLPFSYSAVQYALLHTNWKSHNKPERILQSILYYTLNLLFLAFSIISILSIIAFTLAEWEDDDWENNNDPIIFSFILPSFTVPLTYLLSTSCCLVPGQIGFTDTGINVLVDILILLCSAGDLVPAFDEVKHCYYFAIISSILILIRLLREKLSPEKQSPPPTAPWRIAVFVLILISIVIAYALLAYLIMNADIFDNYSISFGKVERASFHQSPANKQLIS.

It belongs to the UPF0328 family.

The protein is UPF0328 protein ECU06_0020/ECU06_1700 of Encephalitozoon cuniculi (strain GB-M1) (Microsporidian parasite).